We begin with the raw amino-acid sequence, 347 residues long: NADH-ubiquinone oxidoreductase chain 2 (347 aa).

The next 10 helical transmembrane spans lie at 13-33, 56-76, 96-116, 123-143, 149-169, 178-198, 201-221, 247-267, 274-294, and 326-346; these read IFAG…WVGL, AIKY…AILF, LMIM…FWVP, PLTS…SIMY, LNVS…SWGG, ILAY…PYNP, TILN…LLNL, TLLS…WAII, NSLI…YFYL, and LPTL…MLMI.

It belongs to the complex I subunit 2 family. In terms of assembly, core subunit of respiratory chain NADH dehydrogenase (Complex I) which is composed of 45 different subunits. Interacts with TMEM242.

It localises to the mitochondrion inner membrane. It catalyses the reaction a ubiquinone + NADH + 5 H(+)(in) = a ubiquinol + NAD(+) + 4 H(+)(out). Core subunit of the mitochondrial membrane respiratory chain NADH dehydrogenase (Complex I) which catalyzes electron transfer from NADH through the respiratory chain, using ubiquinone as an electron acceptor. Essential for the catalytic activity and assembly of complex I. The sequence is that of NADH-ubiquinone oxidoreductase chain 2 from Homo sapiens (Human).